A 555-amino-acid chain; its full sequence is GMP synthase [glutamine-hydrolyzing] (555 aa).

Residues 8–234 (KILVLNFGSQ…AYNICKCKKQ (227 aa)) form the Glutamine amidotransferase type-1 domain. Cysteine 89 (nucleophile; for GATase activity) is an active-site residue. Residues glutamine 93, asparagine 169, aspartate 172, and histidine 208 each contribute to the L-glutamine site. Residues histidine 208 and glutamate 210 each act as for GATase activity in the active site. The region spanning 235–430 (FDPIRYHELE…LNLPEEITNR (196 aa)) is the GMPS ATP-PPase domain. ATP is bound at residue 262 to 268 (SGGIDST). Residues arginine 336, glutamine 476, lysine 547, isoleucine 552, and glutamate 553 each contribute to the XMP site.

As to quaternary structure, homodimer (via the GMPS ATP-PPase domain). Mg(2+) serves as cofactor.

The catalysed reaction is XMP + L-glutamine + ATP + H2O = GMP + L-glutamate + AMP + diphosphate + 2 H(+). The protein operates within purine metabolism; GMP biosynthesis; GMP from XMP (L-Gln route): step 1/1. Its activity is regulated as follows. The GATase domain is allosterically activated by the binding of substrates, ATP and XMP, to the ATPPase domain, thus ensuring that glutamine hydrolysis occurs only when the ATPPase domain is primed to receive ammonia. Inhibited by Na(+). Inhibited by the reaction product GMP. Its function is as follows. Catalyzes the conversion of xanthine monophosphate (XMP) to GMP in the presence of glutamine and ATP through an adenyl-XMP intermediate, which is the final step of de novo synthesis of GMP. The conversion of XMP to GMP involves the coordinated action of the glutamine amidotransferase (GATase) domain that catalyzes the hydrolysis of the amide side chain of glutamine producing ammonia and the ATP pyrophosphatase (ATPPase) domain that catalyzes the synthesis of adenyl-XMP intermediate from ATP. The ammonia produced by the GATase domain is tunnelled to the ATP-PPase domain where it attacks the adenyl-XMP intermediate generating GMP. The polypeptide is GMP synthase [glutamine-hydrolyzing] (Plasmodium falciparum (isolate 3D7)).